Reading from the N-terminus, the 198-residue chain is Recombination protein RecR (198 aa).

A C4-type zinc finger spans residues 57 to 72 (CSVCGNLTDDDPCLIC). In terms of domain architecture, Toprim spans 80–175 (SVILVVEDSK…KVTRLARGLA (96 aa)).

This sequence belongs to the RecR family.

Its function is as follows. May play a role in DNA repair. It seems to be involved in an RecBC-independent recombinational process of DNA repair. It may act with RecF and RecO. This Streptococcus agalactiae serotype Ia (strain ATCC 27591 / A909 / CDC SS700) protein is Recombination protein RecR.